The sequence spans 380 residues: Acyl-lipid (9+3)-(E)-desaturase (380 aa).

Positions methionine 1–tyrosine 25 are disordered. Over residues valine 9–asparagine 18 the composition is skewed to polar residues. 2 helical membrane passes run leucine 52–phenylalanine 72 and alanine 81–isoleucine 101. Positions histidine 103–histidine 107 match the Histidine box-1 motif. The short motif at histidine 139–histidine 143 is the Histidine box-2 element. Transmembrane regions (helical) follow at residues isoleucine 177 to serine 197, isoleucine 223 to valine 243, and valine 247 to valine 267. The Histidine box-3 motif lies at histidine 313–histidine 317.

This sequence belongs to the fatty acid desaturase type 1 family.

It is found in the membrane. The catalysed reaction is a (9Z)-octadecenoyl-containing glycerolipid + 2 Fe(II)-[cytochrome b5] + O2 + 2 H(+) = a (9Z,12E)-octadecadienoyl-containing glycerolipid + 2 Fe(III)-[cytochrome b5] + 2 H2O. It carries out the reaction a (9Z)-hexadecenoyl-containing glycerolipid + 2 Fe(II)-[cytochrome b5] + O2 + 2 H(+) = a (9Z,12E)-hexadecadienoyl-containing glycerolipid + 2 Fe(III)-[cytochrome b5] + 2 H2O. Functionally, involved in the biosynthesis of dimorphecolic acid (9-OH-18:2(10E,12E)). Converts oleic acid (18:1(9Z)) into 18:2(9Z,12E) and probably palmitoleic acid (16:1(9Z)) into 16:2(9Z,12E). Very limited ability to catalyze (Z)-delta(12) desaturation. This is Acyl-lipid (9+3)-(E)-desaturase from Dimorphotheca sinuata (African daisy).